The following is a 206-amino-acid chain: LexA repressor (206 aa).

Residues 28–48 constitute a DNA-binding region (H-T-H motif); sequence VREIGQAVGLASSSTVHGHLS. Active-site for autocatalytic cleavage activity residues include Ser-128 and Lys-166.

Belongs to the peptidase S24 family. As to quaternary structure, homodimer.

It catalyses the reaction Hydrolysis of Ala-|-Gly bond in repressor LexA.. Its function is as follows. Represses a number of genes involved in the response to DNA damage (SOS response), including recA and lexA. In the presence of single-stranded DNA, RecA interacts with LexA causing an autocatalytic cleavage which disrupts the DNA-binding part of LexA, leading to derepression of the SOS regulon and eventually DNA repair. This chain is LexA repressor, found in Bacillus thuringiensis (strain Al Hakam).